The chain runs to 428 residues: MIVRNIGARLGRRALATPLSRASFPAQSRFLSQDNFTAPPPPPTNSKKQAAKTAFAEPTLEEQAEFYAESIEKHTPEFAASPAAEAWSAPSATATETVTTWDPSLVDEEALKLKQQIEAIPGNFKLFKQTKAQTQKLGAGVEVRYIPEQYLRNPPSDASLEDLMAAQAHMGHNTSLWNPANARYIYGVRQGIHIISLETTATHLRRAARVVEEVAYRGGLILFVGTRPGQRPIVVRAAELAKACHLFTKWRPGTITNREQLLGGVPLTVVDELDRPLSGFEDHLHDRRPLAPDLVVCLNPKENMTLLYECSLAKIPTIGIIDTNTNPSWVTYQIPANDDSLRATALISGVLGRAGERGQKRRLEAAQRGVVTWKTPADVQGYFELASARAADARRRQAQDNSVEEQKEKDTFLSEDALKAMFGGDARI.

Residues 30–50 (FLSQDNFTAPPPPPTNSKKQA) form a disordered region.

This sequence belongs to the universal ribosomal protein uS2 family. Component of the mitochondrial small ribosomal subunit (mt-SSU). Mature N.crassa 74S mitochondrial ribosomes consist of a small (37S) and a large (54S) subunit. The 37S small subunit contains a 16S ribosomal RNA (16S mt-rRNA) and 32 different proteins. The 54S large subunit contains a 23S rRNA (23S mt-rRNA) and 42 different proteins.

Its subcellular location is the mitochondrion. Functionally, component of the mitochondrial ribosome (mitoribosome), a dedicated translation machinery responsible for the synthesis of mitochondrial genome-encoded proteins, including at least some of the essential transmembrane subunits of the mitochondrial respiratory chain. The mitoribosomes are attached to the mitochondrial inner membrane and translation products are cotranslationally integrated into the membrane. The sequence is that of Small ribosomal subunit protein uS2m (mrp4) from Neurospora crassa (strain ATCC 24698 / 74-OR23-1A / CBS 708.71 / DSM 1257 / FGSC 987).